The primary structure comprises 83 residues: Turripeptide Lol11.2 (83 aa).

The signal sequence occupies residues 1-27; it reads MARLMMTVGCLIFIVVLLDMMVPVSNT.

Belongs to the conopeptide I2-like superfamily. Post-translationally, contains 4 disulfide bonds. As to expression, expressed by the venom duct.

It localises to the secreted. Its function is as follows. Acts as a neurotoxin by inhibiting voltage-gated potassium channels (Kv). This is Turripeptide Lol11.2 from Iotyrris olangoensis (Sea snail).